A 227-amino-acid chain; its full sequence is Arginine ABC transporter permease protein ArtM (227 aa).

Residues 13–209 (IPTSLLLTVV…IITGIATLLL (197 aa)) enclose the ABC transmembrane type-1 domain. The next 5 membrane-spanning stretches (helical) occupy residues 17–37 (LLLT…LTFL), 51–71 (LYLT…IYAG), 78–98 (IIDS…ALAL), 155–175 (IILV…DIMG), and 188–208 (LTIY…ATLL).

This sequence belongs to the binding-protein-dependent transport system permease family. HisMQ subfamily. As to quaternary structure, the complex is composed of two ATP-binding proteins (ArtP), two transmembrane proteins (ArtM and ArtQ) and a solute-binding protein (ArtI).

Its subcellular location is the cell inner membrane. In terms of biological role, part of the ABC transporter complex ArtPIQM involved in arginine transport. Probably responsible for the translocation of the substrate across the membrane. The protein is Arginine ABC transporter permease protein ArtM (artM) of Haemophilus influenzae (strain ATCC 51907 / DSM 11121 / KW20 / Rd).